A 286-amino-acid polypeptide reads, in one-letter code: Urease accessory protein UreD 2 (286 aa).

Belongs to the UreD family. In terms of assembly, ureD, UreF and UreG form a complex that acts as a GTP-hydrolysis-dependent molecular chaperone, activating the urease apoprotein by helping to assemble the nickel containing metallocenter of UreC. The UreE protein probably delivers the nickel.

Its subcellular location is the cytoplasm. In terms of biological role, required for maturation of urease via the functional incorporation of the urease nickel metallocenter. The protein is Urease accessory protein UreD 2 of Bradyrhizobium sp. (strain BTAi1 / ATCC BAA-1182).